The chain runs to 270 residues: 5-amino-6-(5-phospho-D-ribitylamino)uracil phosphatase YitU (270 aa).

Residue Asp11 is the Nucleophile of the active site. Asp11 contributes to the Mg(2+) binding site. Leu12 lines the phosphate pocket. Residue Asp13 coordinates Mg(2+). Residues 45–46 (TG) and Lys197 contribute to the phosphate site. Asp220 provides a ligand contact to Mg(2+). Position 223 (Asn223) interacts with phosphate.

This sequence belongs to the HAD-like hydrolase superfamily. Cof family. The cofactor is Mg(2+).

The catalysed reaction is 5-amino-6-(5-phospho-D-ribitylamino)uracil + H2O = 5-amino-6-(D-ribitylamino)uracil + phosphate. The protein operates within cofactor biosynthesis; riboflavin biosynthesis; 5-amino-6-(D-ribitylamino)uracil from GTP: step 4/4. Its function is as follows. Catalyzes the dephosphorylation of the riboflavin precursor 5-amino-6-(5-phospho-D-ribitylamino)uracil and of flavin mononucleotide (FMN) in vitro. This chain is 5-amino-6-(5-phospho-D-ribitylamino)uracil phosphatase YitU (yitU), found in Bacillus subtilis (strain 168).